Consider the following 247-residue polypeptide: Small ribosomal subunit protein uS2 (247 aa).

It belongs to the universal ribosomal protein uS2 family.

This Cupriavidus taiwanensis (strain DSM 17343 / BCRC 17206 / CCUG 44338 / CIP 107171 / LMG 19424 / R1) (Ralstonia taiwanensis (strain LMG 19424)) protein is Small ribosomal subunit protein uS2.